A 487-amino-acid polypeptide reads, in one-letter code: Alpha-1,4-L-rhamnosidase (487 aa).

Residues methionine 1–alanine 30 form the signal peptide. The active-site Proton donor is the glutamate 199.

This sequence belongs to the glycosyl hydrolase 39 family.

Its subcellular location is the periplasm. Alpha-rhamnosidase involved in ulvan degradation. Ulvan is the main polysaccharide component of the Ulvales (green seaweed) cell wall. It is composed of disaccharide building blocks comprising 3-sulfated rhamnose (Rha3S) linked to D-glucuronic acid (GlcA), L-iduronic acid (IduA), or D-xylose (Xyl). Endo-acting alpha-1,4-L-rhamnosidase cleaves rhamnose sections interspersed between xylose residues within the polymer, degrading larger oligomers with consecutive Xyl-Rha3S units that are resistant to the ulvan lyases and producing dimers Xyl-Rha3S and Xyl2S-Rha3S as the smallest products. This Formosa agariphila (strain DSM 15362 / KCTC 12365 / LMG 23005 / KMM 3901 / M-2Alg 35-1) protein is Alpha-1,4-L-rhamnosidase.